The following is a 410-amino-acid chain: PHAF1 protein At3g51130 (410 aa).

This sequence belongs to the PHAF1 family.

This chain is PHAF1 protein At3g51130, found in Arabidopsis thaliana (Mouse-ear cress).